A 278-amino-acid chain; its full sequence is 4-deoxy-L-threo-5-hexosulose-uronate ketol-isomerase (278 aa).

4 residues coordinate Zn(2+): His-196, His-198, Glu-203, and His-245.

Belongs to the KduI family. It depends on Zn(2+) as a cofactor.

The catalysed reaction is 5-dehydro-4-deoxy-D-glucuronate = 3-deoxy-D-glycero-2,5-hexodiulosonate. It functions in the pathway glycan metabolism; pectin degradation; 2-dehydro-3-deoxy-D-gluconate from pectin: step 4/5. In terms of biological role, catalyzes the isomerization of 5-dehydro-4-deoxy-D-glucuronate to 3-deoxy-D-glycero-2,5-hexodiulosonate. The sequence is that of 4-deoxy-L-threo-5-hexosulose-uronate ketol-isomerase from Salmonella typhimurium (strain LT2 / SGSC1412 / ATCC 700720).